The sequence spans 353 residues: DNA-directed RNA polymerase subunit alpha (353 aa).

An alpha N-terminal domain (alpha-NTD) region spans residues 1 to 234; the sequence is MVREKVTVST…DLFIPFLHTE (234 aa). Residues 267–353 are alpha C-terminal domain (alpha-CTD); sequence KRALKSIFID…LAQLIDSKSG (87 aa).

Belongs to the RNA polymerase alpha chain family. In terms of assembly, in plastids the minimal PEP RNA polymerase catalytic core is composed of four subunits: alpha, beta, beta', and beta''. When a (nuclear-encoded) sigma factor is associated with the core the holoenzyme is formed, which can initiate transcription.

It localises to the plastid. The protein resides in the chloroplast. The catalysed reaction is RNA(n) + a ribonucleoside 5'-triphosphate = RNA(n+1) + diphosphate. DNA-dependent RNA polymerase catalyzes the transcription of DNA into RNA using the four ribonucleoside triphosphates as substrates. In Daucus carota (Wild carrot), this protein is DNA-directed RNA polymerase subunit alpha.